Here is a 75-residue protein sequence, read N- to C-terminus: Pi-hexatoxin-Hi1b (75 aa).

Disulfide bonds link Cys3–Cys18, Cys10–Cys23, Cys17–Cys33, Cys40–Cys55, Cys47–Cys60, and Cys54–Cys71. Domain repeat units lie at residues 3 to 33 and 40 to 71; these read CIRK…FEVC and CLVK…SSVC. Residues 3–71 are 2 X approximate repeats with cysteine pattern C-C-CC-C-C; that stretch reads CIRKWLSCVD…KRSGNKSSVC (69 aa).

Belongs to the psalmotoxin-1 family. Double-knot toxin subfamily. In terms of tissue distribution, expressed by the venom gland.

It is found in the secreted. In terms of biological role, this toxin potently and selectively inhibits ASIC1a, an isoform of the gene ASIC1. It incompletely inhibits ASIC1a activation in a pH-independent and slowly reversible manner. This toxin acts by binding to and stabilizing the closed state of the channel, thereby impeding the transition into a conducting state. This toxin may bind to the acidic pocket of ASIC1a, since mutation of a key residue of this pocket (Arg-350) abolishes the ability of the toxin to inhibit ASIC1a. In vivo, this toxin protects the brain from neuronal injury when administered up to 8 hours after stroke onset. The protein is Pi-hexatoxin-Hi1b of Hadronyche infensa (Fraser island funnel-web spider).